The sequence spans 313 residues: Protoheme IX farnesyltransferase (313 aa).

The next 9 membrane-spanning stretches (helical) occupy residues phenylalanine 22 to methionine 42, isoleucine 46 to alanine 66, glycine 98 to alanine 118, valine 121 to tryptophan 141, isoleucine 150 to glycine 170, tryptophan 177 to phenylalanine 197, isoleucine 223 to glycine 243, isoleucine 246 to tryptophan 266, and phenylalanine 284 to leucine 304.

The protein belongs to the UbiA prenyltransferase family. Protoheme IX farnesyltransferase subfamily. In terms of assembly, interacts with CtaA.

The protein localises to the cell inner membrane. The enzyme catalyses heme b + (2E,6E)-farnesyl diphosphate + H2O = Fe(II)-heme o + diphosphate. The protein operates within porphyrin-containing compound metabolism; heme O biosynthesis; heme O from protoheme: step 1/1. In terms of biological role, converts heme B (protoheme IX) to heme O by substitution of the vinyl group on carbon 2 of heme B porphyrin ring with a hydroxyethyl farnesyl side group. This chain is Protoheme IX farnesyltransferase, found in Ruegeria sp. (strain TM1040) (Silicibacter sp.).